We begin with the raw amino-acid sequence, 276 residues long: NADPH-dependent 7-cyano-7-deazaguanine reductase (276 aa).

Position 83–85 (isoleucine 83–serine 85) interacts with substrate. Serine 85 to lysine 86 lines the NADPH pocket. Residue cysteine 184 is the Thioimide intermediate of the active site. Catalysis depends on aspartate 191, which acts as the Proton donor. Residue histidine 223–glutamate 224 coordinates substrate. Arginine 252–glycine 253 provides a ligand contact to NADPH.

It belongs to the GTP cyclohydrolase I family. QueF type 2 subfamily. As to quaternary structure, homodimer.

It is found in the cytoplasm. It catalyses the reaction 7-aminomethyl-7-carbaguanine + 2 NADP(+) = 7-cyano-7-deazaguanine + 2 NADPH + 3 H(+). Its pathway is tRNA modification; tRNA-queuosine biosynthesis. Its function is as follows. Catalyzes the NADPH-dependent reduction of 7-cyano-7-deazaguanine (preQ0) to 7-aminomethyl-7-deazaguanine (preQ1). The protein is NADPH-dependent 7-cyano-7-deazaguanine reductase of Pseudomonas fluorescens (strain SBW25).